The chain runs to 374 residues: Guanine nucleotide-binding protein subunit alpha-15 (374 aa).

The 334-residue stretch at 41 to 374 (GELKLLLLGT…ARYLDEINLL (334 aa)) folds into the G-alpha domain. A G1 motif region spans residues 44 to 57 (KLLLLGTGESGKST). GTP is bound by residues 49–56 (GTGESGKS), 183–189 (LRSRMPT), 208–212 (DVGGQ), 277–280 (NKTD), and A346. 2 residues coordinate Mg(2+): S56 and T189. Residues 181–189 (DVLRSRMPT) form a G2 motif region. The G3 motif stretch occupies residues 204–213 (LRIVDVGGQK). Positions 273–280 (ILFLNKTD) are G4 motif. The segment at 344–349 (TCATDT) is G5 motif.

The protein belongs to the G-alpha family. G(q) subfamily. In terms of assembly, g proteins are composed of 3 units; alpha, beta and gamma. The alpha chain contains the guanine nucleotide binding site.

Its function is as follows. Guanine nucleotide-binding proteins (G proteins) are involved as modulators or transducers in various transmembrane signaling systems. This Oryctolagus cuniculus (Rabbit) protein is Guanine nucleotide-binding protein subunit alpha-15 (GNA15).